Reading from the N-terminus, the 892-residue chain is Protein RRP6-like 3 (892 aa).

A 3'-5' exonuclease domain is found at 119 to 287; the sequence is YVWVETESQL…IADSLTTELK (169 aa). The 87-residue stretch at 350 to 436 folds into the HRDC domain; that stretch reads SLNAEELVRK…CSHLDDIYKM (87 aa). The interval 785 to 811 is disordered; that stretch reads VDDSGDGTSEGDGAKELNDTQCNGNTL.

The protein resides in the cytoplasm. Its subcellular location is the cytosol. In Arabidopsis thaliana (Mouse-ear cress), this protein is Protein RRP6-like 3.